Consider the following 102-residue polypeptide: Small ribosomal subunit protein eS24 (102 aa).

Belongs to the eukaryotic ribosomal protein eS24 family.

The protein is Small ribosomal subunit protein eS24 of Methanococcus maripaludis (strain C5 / ATCC BAA-1333).